Reading from the N-terminus, the 238-residue chain is GATA transcription factor 7 (238 aa).

The tract at residues 24-64 (TSLESSSSQRKEDEQEREKFKSFSDQSTRLSPPEDLLSFPG) is disordered. Residues 32 to 45 (QRKEDEQEREKFKS) are compositionally biased toward basic and acidic residues. The short motif at 112 to 119 (KPRSKRRR) is the Nuclear localization signal element. The GATA-type zinc-finger motif lies at 160-214 (QQLRRCCSHCGVQKTPQWRMGPLGAKTLCNACGVRFKSGRLLPEYRPACSPTFTN).

Belongs to the type IV zinc-finger family. Class A subfamily.

The protein localises to the nucleus. In terms of biological role, transcriptional activator that specifically binds 5'-GATA-3' or 5'-GAT-3' motifs within gene promoters. May be involved in the regulation of some light-responsive genes. This Arabidopsis thaliana (Mouse-ear cress) protein is GATA transcription factor 7 (GATA7).